We begin with the raw amino-acid sequence, 84 residues long: Sulfur carrier protein TusA (84 aa).

The active-site Cysteine persulfide intermediate is the cysteine 21.

It belongs to the sulfur carrier protein TusA family.

The protein resides in the cytoplasm. Sulfur carrier protein which probably makes part of a sulfur-relay system. This Pseudomonas syringae pv. syringae (strain B728a) protein is Sulfur carrier protein TusA.